Consider the following 156-residue polypeptide: Small ribosomal subunit protein uS7 (156 aa).

It belongs to the universal ribosomal protein uS7 family. Part of the 30S ribosomal subunit. Contacts proteins S9 and S11.

In terms of biological role, one of the primary rRNA binding proteins, it binds directly to 16S rRNA where it nucleates assembly of the head domain of the 30S subunit. Is located at the subunit interface close to the decoding center, probably blocks exit of the E-site tRNA. This chain is Small ribosomal subunit protein uS7, found in Desulforamulus reducens (strain ATCC BAA-1160 / DSM 100696 / MI-1) (Desulfotomaculum reducens).